We begin with the raw amino-acid sequence, 455 residues long: Phosphoglucosamine mutase (455 aa).

S102 serves as the catalytic Phosphoserine intermediate. Mg(2+) is bound by residues S102, D241, D243, and D245. S102 bears the Phosphoserine mark.

This sequence belongs to the phosphohexose mutase family. The cofactor is Mg(2+). Activated by phosphorylation.

The catalysed reaction is alpha-D-glucosamine 1-phosphate = D-glucosamine 6-phosphate. Catalyzes the conversion of glucosamine-6-phosphate to glucosamine-1-phosphate. This is Phosphoglucosamine mutase from Legionella pneumophila (strain Paris).